A 376-amino-acid polypeptide reads, in one-letter code: uncharacterized protein (376 aa).

Low complexity-rich tracts occupy residues 73-99 and 228-243; these read NNSI…NNNN and SSFS…TVSS. Disordered stretches follow at residues 73–100 and 222–269; these read NNSI…NNNL and EQDP…KISD.

This is an uncharacterized protein from Saccharomyces cerevisiae (strain ATCC 204508 / S288c) (Baker's yeast).